A 209-amino-acid chain; its full sequence is MKLRGLYAITDSQLLDDGRLLPYVEAALRGGARLLQYRDKSSDQARRLREAESLRELCERYGAQLIVNDDAELAARLGVGLHLGQTDGSLSAARALLGRQAIIGATCHAQLELAEQAVAEGASYVAFGRFFNSSTKPGAPAASVELLDQARPRLPLPITAIGGISLDTAPGLIARGVDLVAVIHALFAAASAAEVERRARAFSALFEPA.

Residues 36–40 (QYRDK) and Asn68 each bind 4-amino-2-methyl-5-(diphosphooxymethyl)pyrimidine. Positions 69 and 87 each coordinate Mg(2+). A 4-amino-2-methyl-5-(diphosphooxymethyl)pyrimidine-binding site is contributed by Thr106. 133 to 135 (SST) is a 2-[(2R,5Z)-2-carboxy-4-methylthiazol-5(2H)-ylidene]ethyl phosphate binding site. 4-amino-2-methyl-5-(diphosphooxymethyl)pyrimidine is bound at residue Lys136. Gly163 lines the 2-[(2R,5Z)-2-carboxy-4-methylthiazol-5(2H)-ylidene]ethyl phosphate pocket.

This sequence belongs to the thiamine-phosphate synthase family. Mg(2+) serves as cofactor.

The enzyme catalyses 2-[(2R,5Z)-2-carboxy-4-methylthiazol-5(2H)-ylidene]ethyl phosphate + 4-amino-2-methyl-5-(diphosphooxymethyl)pyrimidine + 2 H(+) = thiamine phosphate + CO2 + diphosphate. It catalyses the reaction 2-(2-carboxy-4-methylthiazol-5-yl)ethyl phosphate + 4-amino-2-methyl-5-(diphosphooxymethyl)pyrimidine + 2 H(+) = thiamine phosphate + CO2 + diphosphate. It carries out the reaction 4-methyl-5-(2-phosphooxyethyl)-thiazole + 4-amino-2-methyl-5-(diphosphooxymethyl)pyrimidine + H(+) = thiamine phosphate + diphosphate. It participates in cofactor biosynthesis; thiamine diphosphate biosynthesis; thiamine phosphate from 4-amino-2-methyl-5-diphosphomethylpyrimidine and 4-methyl-5-(2-phosphoethyl)-thiazole: step 1/1. Condenses 4-methyl-5-(beta-hydroxyethyl)thiazole monophosphate (THZ-P) and 2-methyl-4-amino-5-hydroxymethyl pyrimidine pyrophosphate (HMP-PP) to form thiamine monophosphate (TMP). The protein is Thiamine-phosphate synthase of Pseudomonas aeruginosa (strain LESB58).